A 253-amino-acid polypeptide reads, in one-letter code: 5'-nucleotidase SurE (253 aa).

Residues D8, D9, S39, and N95 each coordinate a divalent metal cation.

Belongs to the SurE nucleotidase family. A divalent metal cation is required as a cofactor.

It is found in the cytoplasm. The enzyme catalyses a ribonucleoside 5'-phosphate + H2O = a ribonucleoside + phosphate. Nucleotidase that shows phosphatase activity on nucleoside 5'-monophosphates. The protein is 5'-nucleotidase SurE of Clostridium beijerinckii (strain ATCC 51743 / NCIMB 8052) (Clostridium acetobutylicum).